A 60-amino-acid polypeptide reads, in one-letter code: Potassium channel toxin alpha-KTx 15.9 (60 aa).

Residues 1–22 (MKIFLPVLVMLILCSMCLLTEG) form the signal peptide. Cystine bridges form between Cys-30–Cys-51, Cys-36–Cys-56, and Cys-40–Cys-58.

The protein belongs to the short scorpion toxin superfamily. Potassium channel inhibitor family. Alpha-KTx 15 subfamily. In terms of tissue distribution, expressed by the venom gland.

It localises to the secreted. Functionally, blocker of A-type voltage-gated potassium channels of cerebellar granular cells. May also inhibit Kv4/KCND when coexpressed with DPP6 or DPP10. The occlusion of the outer entry of the K(+) conducting pore is partially reversible and affects both open and closed channels. It shares the same target in rat brain than BmTX3 (AC Q8I0L5) and AmmTX3 (AC P60208). Has been shown to weakly inhibit TRPV1 channels. This Lychas mucronatus (Chinese swimming scorpion) protein is Potassium channel toxin alpha-KTx 15.9.